The following is a 349-amino-acid chain: Nicotinate-nucleotide--dimethylbenzimidazole phosphoribosyltransferase (349 aa).

Glutamate 318 acts as the Proton acceptor in catalysis.

It belongs to the CobT family.

It catalyses the reaction 5,6-dimethylbenzimidazole + nicotinate beta-D-ribonucleotide = alpha-ribazole 5'-phosphate + nicotinate + H(+). Its pathway is nucleoside biosynthesis; alpha-ribazole biosynthesis; alpha-ribazole from 5,6-dimethylbenzimidazole: step 1/2. Functionally, catalyzes the synthesis of alpha-ribazole-5'-phosphate from nicotinate mononucleotide (NAMN) and 5,6-dimethylbenzimidazole (DMB). The polypeptide is Nicotinate-nucleotide--dimethylbenzimidazole phosphoribosyltransferase (Alkaliphilus metalliredigens (strain QYMF)).